The sequence spans 213 residues: Protein-L-isoaspartate O-methyltransferase (213 aa).

Residue Ser64 is part of the active site.

Belongs to the methyltransferase superfamily. L-isoaspartyl/D-aspartyl protein methyltransferase family.

The protein resides in the cytoplasm. It carries out the reaction [protein]-L-isoaspartate + S-adenosyl-L-methionine = [protein]-L-isoaspartate alpha-methyl ester + S-adenosyl-L-homocysteine. Functionally, catalyzes the methyl esterification of L-isoaspartyl residues in peptides and proteins that result from spontaneous decomposition of normal L-aspartyl and L-asparaginyl residues. It plays a role in the repair and/or degradation of damaged proteins. This is Protein-L-isoaspartate O-methyltransferase from Flavobacterium johnsoniae (strain ATCC 17061 / DSM 2064 / JCM 8514 / BCRC 14874 / CCUG 350202 / NBRC 14942 / NCIMB 11054 / UW101) (Cytophaga johnsonae).